A 406-amino-acid chain; its full sequence is Tryptophan 2,3-dioxygenase (406 aa).

S19 is subject to Phosphoserine. Residues 72-76 and R144 contribute to the substrate site; that span reads FIITH. A heme-binding site is contributed by H328. T342 lines the substrate pocket.

This sequence belongs to the tryptophan 2,3-dioxygenase family. As to quaternary structure, homotetramer. Dimer of dimers. Heme is required as a cofactor. As to expression, liver.

The catalysed reaction is L-tryptophan + O2 = N-formyl-L-kynurenine. The protein operates within amino-acid degradation; L-tryptophan degradation via kynurenine pathway; L-kynurenine from L-tryptophan: step 1/2. Functionally, heme-dependent dioxygenase that catalyzes the oxidative cleavage of the L-tryptophan (L-Trp) pyrrole ring and converts L-tryptophan to N-formyl-L-kynurenine. Catalyzes the oxidative cleavage of the indole moiety. The sequence is that of Tryptophan 2,3-dioxygenase from Rattus norvegicus (Rat).